The chain runs to 1122 residues: Histone deacetylase 5 (1122 aa).

Positions 1–22 are disordered; that stretch reads MNSPNESDGMSGREPSLEILPR. Lys35 is covalently cross-linked (Glycyl lysine isopeptide (Lys-Gly) (interchain with G-Cter in SUMO2)). Residues 196–281 are disordered; it reads KEPTPGGLNH…KVAERRSSPL (86 aa). The segment covering 247-258 has biased composition (basic and acidic residues); it reads DSRDDFPLRKTA. Ser259 is modified (phosphoserine; by AMPK, CaMK1, SIK1 and PKD/PRKD1). Basic and acidic residues predominate over residues 272 to 281; the sequence is KVAERRSSPL. At Thr292 the chain carries Phosphothreonine; by PKC. 2 disordered regions span residues 302 to 343 and 481 to 504; these read GAGP…NIPT and MRTV…LPQS. Positions 312–327 are enriched in low complexity; that stretch reads NSAPGSGPSSPNSSHS. Positions 328-340 are enriched in polar residues; that stretch reads TIAENGFTGSVPN. Low complexity predominate over residues 494-504; sequence SRTQSSPLPQS. A Phosphoserine; by AMPK, CaMK1, SIK1 and PKD/PRKD1 modification is found at Ser498. Lys533 carries the N6-acetyllysine modification. The disordered stretch occupies residues 536 to 625; it reads TKTGELPRQP…GPDLEEPGAG (90 aa). Residues 581–621 are compositionally biased toward acidic residues; the sequence is STQEDLEEEDEEEDGEEEEDCIQVKDEEGESGAEEGPDLEE. Phosphoserine is present on residues Ser611 and Ser661. Residues 684–1028 are histone deacetylase; sequence GVVYDTFMLK…VSALLSVELQ (345 aa). Zn(2+)-binding residues include Cys696, Cys698, His704, and Cys781. His833 is a catalytic residue. Positions 1081–1122 match the Nuclear export signal motif; sequence EEAETVSAMALLSVGAEQAQAAAAREHSPRPAEEPMEQEPAL. The tract at residues 1097 to 1122 is disordered; sequence EQAQAAAAREHSPRPAEEPMEQEPAL. A compositionally biased stretch (basic and acidic residues) spans 1104-1113; the sequence is AREHSPRPAE. A Phosphoserine modification is found at Ser1108.

It belongs to the histone deacetylase family. HD type 2 subfamily. As to quaternary structure, interacts with AHRR, BAHD1, BCOR, HDAC7, HDAC9, CTBP1, MEF2C, NCOR2, NRIP1, PHB2 and a 14-3-3 chaperone protein. Interacts with BCL6, DDIT3/CHOP, GRK5, KDM5B and MYOCD. Interacts with EP300 in the presence of TFAP2C. Interacts with ANKRA2. Interacts with CUL7 (as part of the 3M complex); negatively regulated by ANKRA2. Interacts with ZBTB7B; the interaction allows the recruitment of HDAC4 on CD8 loci for deacetylation and possible inhibition of CD8 genes expression. Interacts with RARA. In terms of processing, phosphorylated by AMPK, CaMK1, SIK1 and PRKD1 at Ser-259 and Ser-498. The phosphorylation is required for the export to the cytoplasm and inhibition. Phosphorylated by the PKC kinases PKN1 and PKN2, impairing nuclear import. Phosphorylated by GRK5, leading to nuclear export of HDAC5 and allowing MEF2-mediated transcription. Ubiquitinated. Polyubiquitination however does not lead to its degradation.

Its subcellular location is the nucleus. It is found in the cytoplasm. It catalyses the reaction N(6)-acetyl-L-lysyl-[histone] + H2O = L-lysyl-[histone] + acetate. Functionally, responsible for the deacetylation of lysine residues on the N-terminal part of the core histones (H2A, H2B, H3 and H4). Histone deacetylation gives a tag for epigenetic repression and plays an important role in transcriptional regulation, cell cycle progression and developmental events. Histone deacetylases act via the formation of large multiprotein complexes. Involved in muscle maturation by repressing transcription of myocyte enhancer MEF2C. During muscle differentiation, it shuttles into the cytoplasm, allowing the expression of myocyte enhancer factors. Serves as a corepressor of RARA and causes its deacetylation. In association with RARA, plays a role in the repression of microRNA-10a and thereby in the inflammatory response. The chain is Histone deacetylase 5 (HDAC5) from Pongo abelii (Sumatran orangutan).